The sequence spans 103 residues: Conantokin R1-A (103 aa).

A signal peptide spans 1 to 21; the sequence is MQLYTYLYLLVPLVTFHLILG. The propeptide occupies 22-79; sequence TGTLDHGGALTERRSTDATALKPEPVLQKSAARSTDDNGKDRLTQMKRILKKRGNNPR. A disordered region spans residues 34 to 83; it reads RRSTDATALKPEPVLQKSAARSTDDNGKDRLTQMKRILKKRGNNPRADEE. Over residues 55–65 the composition is skewed to basic and acidic residues; sequence STDDNGKDRLT. Residues Glu-82, Glu-83, and Glu-89 each carry the 4-carboxyglutamate modification.

Belongs to the conotoxin B superfamily. It depends on Ca(2+) as a cofactor. The cofactor is Mg(2+). As to expression, expressed by the venom duct.

The protein localises to the secreted. Functionally, conantokins inhibit N-methyl-D-aspartate (NMDA) receptors. This toxin has the highest potency for the NR2B/GRIN2B subunit (IC(50)=0.11 uM), followed by NR2D/GRIN2D (IC(50)=0.48 uM), NR2A/GRIN2A (IC(50)=2.1 uM), and NR2C/GRIN2C (IC(50)=6.1 uM) subunits when tested on rat receptors. The protein is Conantokin R1-A of Conus rolani (Cone snail).